We begin with the raw amino-acid sequence, 162 residues long: Heat shock protein beta-6 (162 aa).

The segment at 1–72 (MEIRVPVQPS…PTAQVPTDPG (72 aa)) is involved in stabilization of the HSPB1:HSBP6 heterodimer. Serine 16 is subject to Phosphoserine. Glutamine 31 participates in a covalent cross-link: Isoglutamyl lysine isopeptide (Gln-Lys) (interchain with K-162). Residues 56-162 (RAPSVALPTA…ASLPSPPAAK (107 aa)) form the sHSP domain. Deamidated glutamine is present on glutamine 66. Phosphoserine is present on serine 157. Lysine 162 participates in a covalent cross-link: Isoglutamyl lysine isopeptide (Lys-Gln) (interchain with Q-31).

Belongs to the small heat shock protein (HSP20) family. In terms of assembly, homodimer. Small heat shock proteins form high molecular mass oligomers containing variable number of monomers; these oligomers display a very flexible quaternary structure easily exchanging their subunits. Heterooligomer with HSPB1; formed through oligomerization of HSPB1:HSBP6 dimers; subunit exchange leads to formation of at least two different heterooligomeric complexes, differing in variable quantities of HSPB1 and HSPB6 homodimers in addition to HSPB1:HSPB6 heterodimers. Heterooligomer with CRYAB; large heterooligomers consist of CRYAB homodimers and HSPB5:HSPB6 heterodimers but lacking HSPB6 homodimers. Interacts with BAG3. Interacts (phosphorylated) with YWHAZ. Interacts with PDE4A and PDE4D; required for maintenance of the non-phosphorylated state of HSPB6 under basal conditions. Interacts with KDR. Interacts with PRKD1. The N-terminus is blocked. In terms of processing, phosphorylated at Ser-16 by PKA and probably PKD1K; required to protect cardiomyocytes from apoptosis. Widely expressed. High expression in muscle tissues.

The protein localises to the cytoplasm. It is found in the nucleus. The protein resides in the secreted. Functionally, small heat shock protein which functions as a molecular chaperone probably maintaining denatured proteins in a folding-competent state. Seems to have versatile functions in various biological processes. Plays a role in regulating muscle function such as smooth muscle vasorelaxation and cardiac myocyte contractility. May regulate myocardial angiogenesis implicating KDR. Overexpression mediates cardioprotection and angiogenesis after induced damage. Stabilizes monomeric YWHAZ thereby supporting YWHAZ chaperone-like activity. In Rattus norvegicus (Rat), this protein is Heat shock protein beta-6 (Hspb6).